The following is a 153-amino-acid chain: Probable succinate transporter subunit YjjB (153 aa).

A run of 4 helical transmembrane segments spans residues 7–27, 51–71, 83–103, and 125–145; these read WALLQDMVLAAIPALGFAMVF, MIHFGMNIELASLVASIMIGI, VFTVAAVIPMFPGISAYTAMI, and FLKASFIVGALSIGLSLPGLW.

The protein belongs to the ThrE exporter (TC 2.A.79) family. As to quaternary structure, the transporter is composed of YjjB and YjjP.

The protein resides in the cell inner membrane. Functionally, involved in succinate export with YjjP. Both proteins are required for export. This Yersinia pestis bv. Antiqua (strain Antiqua) protein is Probable succinate transporter subunit YjjB.